Consider the following 310-residue polypeptide: Carbamate kinase-like protein YqeA (310 aa).

Belongs to the carbamate kinase family.

This is Carbamate kinase-like protein YqeA (yqeA) from Escherichia coli (strain K12).